The chain runs to 1115 residues: Rho GTPase-activating protein gacW (1115 aa).

The disordered stretch occupies residues 661–691; that stretch reads PPIGPPSTPTKSSNPGFQTLPKRPTRGPLYP. Residues 699–880 enclose the Rho-GAP domain; that stretch reads VTLTDKAQIN…FMIVNYFDIF (182 aa). 2 disordered regions span residues 888 to 1065 and 1092 to 1115; these read SSDN…GDGK and ESRT…GPSL. Residues 898–929 are compositionally biased toward low complexity; it reads DSTQSTCTTNNNNLVATSLSSPISPSTTPTKS. Polar residues-rich tracts occupy residues 934–943 and 959–990; these read LHTTVEVSRS and RPIS…SRPS. Residues 1013–1046 show a composition bias toward low complexity; that stretch reads SNHSSSGQLNNNNSNNNTTSNSSNSSSGKSSSNP.

The protein localises to the cytoplasm. Functionally, rho GTPase-activating protein involved in the signal transduction pathway. This chain is Rho GTPase-activating protein gacW (gacW), found in Dictyostelium discoideum (Social amoeba).